The following is a 199-amino-acid chain: Fe/S biogenesis protein NfuA (199 aa).

Residues C151 and C154 each coordinate [4Fe-4S] cluster.

Belongs to the NfuA family. Homodimer. The cofactor is [4Fe-4S] cluster.

Its function is as follows. Involved in iron-sulfur cluster biogenesis. Binds a 4Fe-4S cluster, can transfer this cluster to apoproteins, and thereby intervenes in the maturation of Fe/S proteins. Could also act as a scaffold/chaperone for damaged Fe/S proteins. The polypeptide is Fe/S biogenesis protein NfuA (Xanthomonas oryzae pv. oryzae (strain PXO99A)).